We begin with the raw amino-acid sequence, 374 residues long: Heme A synthase (374 aa).

Residues Met1–His22 are disordered. Helical transmembrane passes span Ile32–Gly52, Arg118–Thr138, Leu149–Ser169, Val184–Val204, and Leu226–Leu246. His281 lines the heme pocket. Helical transmembrane passes span Leu283–Phe300, Ala309–Leu329, and Val332–Ile352. Residue His340 coordinates heme.

Belongs to the COX15/CtaA family. Type 2 subfamily. In terms of assembly, interacts with CtaB. Requires heme b as cofactor.

It localises to the cell membrane. It carries out the reaction Fe(II)-heme o + 2 A + H2O = Fe(II)-heme a + 2 AH2. Its pathway is porphyrin-containing compound metabolism; heme A biosynthesis; heme A from heme O: step 1/1. Functionally, catalyzes the conversion of heme O to heme A by two successive hydroxylations of the methyl group at C8. The first hydroxylation forms heme I, the second hydroxylation results in an unstable dihydroxymethyl group, which spontaneously dehydrates, resulting in the formyl group of heme A. This chain is Heme A synthase, found in Granulibacter bethesdensis (strain ATCC BAA-1260 / CGDNIH1).